The chain runs to 333 residues: Adenosine deaminase (333 aa).

Positions 12 and 14 each coordinate Zn(2+). Substrate contacts are provided by His14, Asp16, and Gly170. His197 serves as a coordination point for Zn(2+). Glu200 (proton donor) is an active-site residue. Asp278 contributes to the Zn(2+) binding site. Asp279 is a substrate binding site.

It belongs to the metallo-dependent hydrolases superfamily. Adenosine and AMP deaminases family. Adenosine deaminase subfamily. Zn(2+) is required as a cofactor.

The catalysed reaction is adenosine + H2O + H(+) = inosine + NH4(+). It carries out the reaction 2'-deoxyadenosine + H2O + H(+) = 2'-deoxyinosine + NH4(+). Its function is as follows. Catalyzes the hydrolytic deamination of adenosine and 2-deoxyadenosine. The sequence is that of Adenosine deaminase from Salmonella schwarzengrund (strain CVM19633).